Here is a 364-residue protein sequence, read N- to C-terminus: tRNA 2-selenouridine synthase (364 aa).

The region spanning 14 to 137 is the Rhodanese domain; sequence LIADTPIIDV…LRQTAIQATI (124 aa). Catalysis depends on Cys-97, which acts as the S-selanylcysteine intermediate.

It belongs to the SelU family. As to quaternary structure, monomer.

It catalyses the reaction 5-methylaminomethyl-2-thiouridine(34) in tRNA + selenophosphate + (2E)-geranyl diphosphate + H2O + H(+) = 5-methylaminomethyl-2-selenouridine(34) in tRNA + (2E)-thiogeraniol + phosphate + diphosphate. The enzyme catalyses 5-methylaminomethyl-2-thiouridine(34) in tRNA + (2E)-geranyl diphosphate = 5-methylaminomethyl-S-(2E)-geranyl-thiouridine(34) in tRNA + diphosphate. It carries out the reaction 5-methylaminomethyl-S-(2E)-geranyl-thiouridine(34) in tRNA + selenophosphate + H(+) = 5-methylaminomethyl-2-(Se-phospho)selenouridine(34) in tRNA + (2E)-thiogeraniol. The catalysed reaction is 5-methylaminomethyl-2-(Se-phospho)selenouridine(34) in tRNA + H2O = 5-methylaminomethyl-2-selenouridine(34) in tRNA + phosphate. Functionally, involved in the post-transcriptional modification of the uridine at the wobble position (U34) of tRNA(Lys), tRNA(Glu) and tRNA(Gln). Catalyzes the conversion of 2-thiouridine (S2U-RNA) to 2-selenouridine (Se2U-RNA). Acts in a two-step process involving geranylation of 2-thiouridine (S2U) to S-geranyl-2-thiouridine (geS2U) and subsequent selenation of the latter derivative to 2-selenouridine (Se2U) in the tRNA chain. The polypeptide is tRNA 2-selenouridine synthase (Escherichia coli (strain K12 / MC4100 / BW2952)).